Here is a 339-residue protein sequence, read N- to C-terminus: GDP-fucose transporter 1 (339 aa).

Helical transmembrane passes span 9–29, 45–65, 82–102, 111–133, 136–156, 165–185, 209–229, and 237–257; these read SVRI…LVFL, LFVT…LSLL, LSVA…ITFN, VSFY…YVIL, STSY…LMGV, ISYS…LNAI, ACFL…VAHF, and FWLM…ITGL. The disordered stretch occupies residues 319–339; sequence AHTIQASKDDKALQEDGQTKV. A compositionally biased stretch (basic and acidic residues) spans 325–339; the sequence is SKDDKALQEDGQTKV.

It belongs to the TPT transporter family. SLC35C subfamily.

The protein localises to the golgi apparatus membrane. It carries out the reaction GMP(out) + GDP-beta-L-fucose(in) = GMP(in) + GDP-beta-L-fucose(out). Antiporter specific for GDP-l-fucose and depending on the concomitant reverse transport of GMP. Involved in GDP-fucose import from the cytoplasm into the Golgi lumen. This is GDP-fucose transporter 1 (slc35c1) from Nematostella vectensis (Starlet sea anemone).